Here is a 980-residue protein sequence, read N- to C-terminus: MAAATASSALKRLDLRDPNALFETHGAEEIRGLERQVRAEIEHKKEELRQMVGERYRDLIEAADTIGQMRRCAEGLVDAVQATDQYCARLRQAGSVAPRVPRAPQPQPPSEKFYSMAAQIKLLLEIPEKIWSAMEASQHLQATQLYLLCCHLHSLLQLDSSNSRYSPILSRFPILIRQVAAASHFRSTILHESKMLLKCQAVSDQAVAEALCSIMLLEESSPRQALTDFLLARKATIQTLLNQSHHGAGIKAQICSLVELLATTLNQAHALFYTLPEGVLPDPSLPCGLLFSTLETVTRQHPTGKGIGALQGEMKLCSWFRHLPTSIIEFQPTLRTLAHPISQEYLKDTLQKWIDMCNEDIKNGIGNLLMYVKSMKGLAGIRDAIWDLLSNESASHSWEVVCQRLLEKPLLFWEDLMQQLFLDRLQTLTREGFESISNSSKELLVSALQELETNNSTSNKHVHFEQNMSFFLWSESPNDLPSDAAWVSVANRAQFASSGLSMKAQAISPCVQNFCSALDSKLKVKLDDLLAYLPSSDTPLLKDTTPTHQPKNSAFDRYADAGTVQDMLRTQSVACIKSVVGCIQAELCTIEEVTREQKDVLHSTKLHAVLFMARLCQSLGELCPHLKQCVVGQCGGSEKPAREARALKKQGKGRAQDVLPAQAQWQGVKEVLLQQSVMAYRVWSTALVKFLICGFTRSLLLRDAGSVLATATNWDELEIQEETESGSSVTSKIRLPTQPSWYVQSFLFSLCQEVNRVGGHALPKVTLQEMLKTCMAQVIAAYEQLTEENQIKKEGAFPMTQNRALQLLYDLRYLTMVLSSKGEEVKSGRSKADSRMEKMTERLEALIDPFDLDVFTPHLNSNLNRLVQRTSVLFGLVTGTENQFASRSSTFNSQEPHNILPLASSQIRFGLLPLSMTSTRKARATSRSVETQAQVGPPALSRVGDPTTHPGSLFRQLASEEDDSPAPSLFKLAWLSSMTK.

An N-acetylalanine modification is found at Ala2. Ser7 is modified (phosphoserine). N6-acetyllysine is present on Lys598. A compositionally biased stretch (polar residues) spans 923-934 (RATSRSVETQAQ). A disordered region spans residues 923 to 950 (RATSRSVETQAQVGPPALSRVGDPTTHP).

This sequence belongs to the COG1 family. In terms of assembly, component of the conserved oligomeric Golgi complex which is composed of eight different subunits and is required for normal Golgi morphology and localization.

The protein resides in the golgi apparatus membrane. Its function is as follows. Required for normal Golgi function. This Mus musculus (Mouse) protein is Conserved oligomeric Golgi complex subunit 1 (Cog1).